The chain runs to 294 residues: Ankyrin repeat and SOCS box protein 9 (294 aa).

Met1 is subject to N-acetylmethionine. ANK repeat units lie at residues 35 to 64 (SDWSPMHEAAIHGHQLSLRNLISQGWAVNI), 68 to 97 (DHVSPLHEACLGGHLSCVKILLKHGAQVNG), 101 to 130 (DWHTPLFNACVSGSWDCVNLLLQHGASVQP), 133 to 162 (DLASPIHEAARRGHVECVNSLIAYGGNIDH), 166 to 195 (HLGTPLYLACENQQRACVKKLLESGADVNQ), and 198 to 227 (GQDSPLHAVARTASEELACLLMDFGADTQA). A Phosphoserine modification is found at Ser51. In terms of domain architecture, SOCS box spans 240–294 (PPESPLAQLFLEREGPPSLMQLCRLRIRKCFGIQQHHKITKLVLPEDLKQFLLHL).

This sequence belongs to the ankyrin SOCS box (ASB) family. In terms of assembly, substrate-recognition component of the ECS(ASB9) complex, composed of ASB9, CUL5, ELOB, ELOC and RNF7/RBX2. Predominantly expressed in testis, kidney, and liver.

Its subcellular location is the mitochondrion. The protein operates within protein modification; protein ubiquitination. Its function is as follows. Substrate-recognition component of a cullin-5-RING E3 ubiquitin-protein ligase complex (ECS complex, also named CRL5 complex), which mediates the ubiquitination and subsequent proteasomal degradation of target proteins. The ECS(ASB9) complex catalyzes ubiquitination of creatine kinases CKB and CKMT1A. In terms of biological role, does not interact with the Elongin BC complex, likely to be a negative regulator of isoform 1. This Homo sapiens (Human) protein is Ankyrin repeat and SOCS box protein 9.